Consider the following 252-residue polypeptide: N-acetylglucosaminyl-phosphatidylinositol de-N-acetylase (252 aa).

A helical membrane pass occupies residues 2-22; it reads ELVGFLCVAVAVLTWGFLRVW. Residues 23 to 252 are Cytoplasmic-facing; that stretch reads NSAERMRSPE…YMRINSLRFL (230 aa).

It belongs to the PIGL family.

The protein localises to the endoplasmic reticulum membrane. It catalyses the reaction a 6-(N-acetyl-alpha-D-glucosaminyl)-1-(1,2-diacyl-sn-glycero-3-phospho)-1D-myo-inositol + H2O = a 6-(alpha-D-glucosaminyl)-1-(1,2-diacyl-sn-glycero-3-phospho)-1D-myo-inositol + acetate. The protein operates within glycolipid biosynthesis; glycosylphosphatidylinositol-anchor biosynthesis. Its function is as follows. Catalyzes the second step of glycosylphosphatidylinositol (GPI) biosynthesis, which is the de-N-acetylation of N-acetylglucosaminyl-phosphatidylinositol. The protein is N-acetylglucosaminyl-phosphatidylinositol de-N-acetylase (Pigl) of Mus musculus (Mouse).